The following is a 332-amino-acid chain: Aquaporin-7-1 (332 aa).

The Cytoplasmic segment spans residues 1-66 (MSGQHQITEQ…RHAIRMPMAE (66 aa)). The chain crosses the membrane as a helical span at residues 67-87 (FFGVALLIIFGAGSACQVVLS). Residues 88–100 (TNPNVASSDRGSF) lie on the Extracellular side of the membrane. A helical transmembrane segment spans residues 101-121 (LSINLGWAIGIAMGAWVSGGI). The Cytoplasmic segment spans residues 122-144 (SGGHINPAITIAMATYRGFPWRR). The NPA 1 signature appears at 127-129 (NPA). Residues 145–165 (VPSYIFAQVLGGVVGAALVYA) traverse the membrane as a helical segment. At 166-199 (NYIHAIDIFEGGRHVRTQATASLFATYALPYMTQ) the chain is on the extracellular side. The chain crosses the membrane as a helical span at residues 200-220 (VSCFFSEFLATAVLSMMVLAL). The Cytoplasmic segment spans residues 221-230 (TDNRNGAPTN). The helical transmembrane segment at 231–251 (GLLPFALFVLFIGLGASLGME) threads the bilayer. Residues 252-283 (TAYALNPARDFGPRLFLAMSGYGKALFNYRSQ) lie on the Extracellular side of the membrane. An NPA 2 motif is present at residues 257-259 (NPA). The helical transmembrane segment at 284–304 (YWLWAPIIAPVLGAQAGGLLY) threads the bilayer. The Cytoplasmic segment spans residues 305 to 332 (DTFLYDGDNSPIKWRRASSQECQLAEVV).

This sequence belongs to the MIP/aquaporin (TC 1.A.8) family.

It localises to the membrane. The catalysed reaction is H2O(in) = H2O(out). In terms of biological role, water channel required to facilitate the transport of water across membranes. Does not mediate the transport carbon dioxide across the membrane. The chain is Aquaporin-7-1 from Laccaria bicolor (Bicoloured deceiver).